A 196-amino-acid polypeptide reads, in one-letter code: Transcriptional regulatory protein UhpA (196 aa).

A Response regulatory domain is found at 3 to 116; it reads TVALIDDHLI…ELIAAVHTVA (114 aa). Aspartate 54 is modified (4-aspartylphosphate). The HTH luxR-type domain maps to 131–196; the sequence is ASGRQDPLTK…ELARRMFDGW (66 aa). Residues 155–174 constitute a DNA-binding region (H-T-H motif); the sequence is VKEIAAELGLSPKTVHVHRA.

Post-translationally, phosphorylated and dephosphorylated by UhpB.

It is found in the cytoplasm. Its activity is regulated as follows. Phosphorylation by UhpB enhances DNA binding activity. In terms of biological role, part of the UhpABC signaling cascade that controls the expression of the hexose phosphate transporter UhpT. Activates the transcription of the uhpT gene. Acts by binding specifically to the uhpT promoter region. This is Transcriptional regulatory protein UhpA (uhpA) from Escherichia coli (strain K12).